The primary structure comprises 309 residues: Elongation factor Ts (309 aa).

The interval 82-85 (TDFV) is involved in Mg(2+) ion dislocation from EF-Tu.

Belongs to the EF-Ts family.

It localises to the cytoplasm. Its function is as follows. Associates with the EF-Tu.GDP complex and induces the exchange of GDP to GTP. It remains bound to the aminoacyl-tRNA.EF-Tu.GTP complex up to the GTP hydrolysis stage on the ribosome. This chain is Elongation factor Ts, found in Rickettsia rickettsii (strain Iowa).